A 157-amino-acid polypeptide reads, in one-letter code: Tripartite terminase subunit 2 (157 aa).

The interval 1–69 is disordered; that stretch reads MSWAKQRVPF…DGEDGHALPD (69 aa). A compositionally biased stretch (acidic residues) spans 11–27; it reads LDDDDGEEENDVQDDVD.

Belongs to the herpesviridae TRM2 protein family. In terms of assembly, associates with TRM1 and TRM3 to form the tripartite terminase complex.

It is found in the host nucleus. Component of the molecular motor that translocates viral genomic DNA in empty capsid during DNA packaging. Forms a tripartite terminase complex together with TRM1 and TRM3 in the host cytoplasm. Once the complex reaches the host nucleus, it interacts with the capsid portal vertex. This portal forms a ring in which genomic DNA is translocated into the capsid. The protein is Tripartite terminase subunit 2 of Homo sapiens (Human).